A 236-amino-acid chain; its full sequence is Small ribosomal subunit protein uS2c (236 aa).

This sequence belongs to the universal ribosomal protein uS2 family.

It is found in the plastid. The protein resides in the chloroplast. This chain is Small ribosomal subunit protein uS2c (rps2), found in Liriodendron tulipifera (Tuliptree).